The following is a 358-amino-acid chain: S-adenosylmethionine:tRNA ribosyltransferase-isomerase (358 aa).

It belongs to the QueA family. As to quaternary structure, monomer.

Its subcellular location is the cytoplasm. It carries out the reaction 7-aminomethyl-7-carbaguanosine(34) in tRNA + S-adenosyl-L-methionine = epoxyqueuosine(34) in tRNA + adenine + L-methionine + 2 H(+). It participates in tRNA modification; tRNA-queuosine biosynthesis. Transfers and isomerizes the ribose moiety from AdoMet to the 7-aminomethyl group of 7-deazaguanine (preQ1-tRNA) to give epoxyqueuosine (oQ-tRNA). The polypeptide is S-adenosylmethionine:tRNA ribosyltransferase-isomerase (Rhodopseudomonas palustris (strain BisA53)).